The sequence spans 311 residues: Ribosomal RNA small subunit methyltransferase H (311 aa).

S-adenosyl-L-methionine contacts are provided by residues 32–34 (AGH), aspartate 52, phenylalanine 79, aspartate 100, and glutamine 107. Positions 287-311 (TASQEELEENNRARSAKLRIAEKRK) are disordered. Residues 300–311 (RSAKLRIAEKRK) are compositionally biased toward basic residues.

Belongs to the methyltransferase superfamily. RsmH family.

It is found in the cytoplasm. The enzyme catalyses cytidine(1402) in 16S rRNA + S-adenosyl-L-methionine = N(4)-methylcytidine(1402) in 16S rRNA + S-adenosyl-L-homocysteine + H(+). Functionally, specifically methylates the N4 position of cytidine in position 1402 (C1402) of 16S rRNA. The chain is Ribosomal RNA small subunit methyltransferase H from Bacillus subtilis (strain 168).